The sequence spans 565 residues: Proline--tRNA ligase (565 aa).

This sequence belongs to the class-II aminoacyl-tRNA synthetase family. ProS type 1 subfamily. In terms of assembly, homodimer.

The protein resides in the cytoplasm. It carries out the reaction tRNA(Pro) + L-proline + ATP = L-prolyl-tRNA(Pro) + AMP + diphosphate. In terms of biological role, catalyzes the attachment of proline to tRNA(Pro) in a two-step reaction: proline is first activated by ATP to form Pro-AMP and then transferred to the acceptor end of tRNA(Pro). As ProRS can inadvertently accommodate and process non-cognate amino acids such as alanine and cysteine, to avoid such errors it has two additional distinct editing activities against alanine. One activity is designated as 'pretransfer' editing and involves the tRNA(Pro)-independent hydrolysis of activated Ala-AMP. The other activity is designated 'posttransfer' editing and involves deacylation of mischarged Ala-tRNA(Pro). The misacylated Cys-tRNA(Pro) is not edited by ProRS. This Hydrogenobaculum sp. (strain Y04AAS1) protein is Proline--tRNA ligase.